The sequence spans 187 residues: Putative manganese efflux pump MntP (187 aa).

6 helical membrane-spanning segments follow: residues 3-23 (WLTI…VALA), 39-59 (LGFH…LLGM), 65-85 (ISAY…GRMV), 103-123 (GMTM…VGLS), 124-144 (IAML…VAGV), and 166-186 (ICGG…HTLL).

The protein belongs to the MntP (TC 9.B.29) family.

It is found in the cell inner membrane. Functionally, probably functions as a manganese efflux pump. The polypeptide is Putative manganese efflux pump MntP (Geobacter sp. (strain M21)).